We begin with the raw amino-acid sequence, 170 residues long: uncharacterized protein (170 aa).

The chain crosses the membrane as a helical span at residues 7–27 (LVELLIGLAIISIALNFAVPL).

The protein resides in the membrane. This is an uncharacterized protein from Haemophilus influenzae (strain ATCC 51907 / DSM 11121 / KW20 / Rd).